We begin with the raw amino-acid sequence, 330 residues long: tRNA-modifying protein YgfZ (330 aa).

2 residues coordinate folate: Trp28 and Trp192.

It belongs to the tRNA-modifying YgfZ family.

It is found in the cytoplasm. Functionally, folate-binding protein involved in regulating the level of ATP-DnaA and in the modification of some tRNAs. It is probably a key factor in regulatory networks that act via tRNA modification, such as initiation of chromosomal replication. The protein is tRNA-modifying protein YgfZ of Blochmanniella pennsylvanica (strain BPEN).